Here is a 178-residue protein sequence, read N- to C-terminus: Nicotinamide-nucleotide adenylyltransferase (178 aa).

This sequence belongs to the archaeal NMN adenylyltransferase family.

It is found in the cytoplasm. The enzyme catalyses beta-nicotinamide D-ribonucleotide + ATP + H(+) = diphosphate + NAD(+). It functions in the pathway cofactor biosynthesis; NAD(+) biosynthesis; NAD(+) from nicotinamide D-ribonucleotide: step 1/1. The chain is Nicotinamide-nucleotide adenylyltransferase from Thermoplasma volcanium (strain ATCC 51530 / DSM 4299 / JCM 9571 / NBRC 15438 / GSS1).